The chain runs to 327 residues: ATP-dependent (S)-NAD(P)H-hydrate dehydratase (327 aa).

Positions 11 to 313 (LLTRVKRIIP…RHVGKAYNAL (303 aa)) constitute a YjeF C-terminal domain. Residues G121 and 174–180 (NVIEFKR) each bind (6S)-NADPHX. Residues 209-213 (KGQSD) and 228-237 (GGLKRCGGQG) each bind ATP. D238 provides a ligand contact to (6S)-NADPHX.

This sequence belongs to the NnrD/CARKD family. It depends on Mg(2+) as a cofactor.

The protein localises to the cytoplasm. It carries out the reaction (6S)-NADHX + ATP = ADP + phosphate + NADH + H(+). The enzyme catalyses (6S)-NADPHX + ATP = ADP + phosphate + NADPH + H(+). Catalyzes the dehydration of the S-form of NAD(P)HX at the expense of ATP, which is converted to ADP. Together with NAD(P)HX epimerase, which catalyzes the epimerization of the S- and R-forms, the enzyme allows the repair of both epimers of NAD(P)HX, a damaged form of NAD(P)H that is a result of enzymatic or heat-dependent hydration. This Schizosaccharomyces pombe (strain 972 / ATCC 24843) (Fission yeast) protein is ATP-dependent (S)-NAD(P)H-hydrate dehydratase.